The primary structure comprises 181 residues: Large ribosomal subunit protein uL5c (181 aa).

This sequence belongs to the universal ribosomal protein uL5 family. Part of the 50S ribosomal subunit; contacts the 5S rRNA.

Its subcellular location is the plastid. It is found in the chloroplast. Functionally, binds 5S rRNA, forms part of the central protuberance of the 50S subunit. The chain is Large ribosomal subunit protein uL5c (rpl5) from Guillardia theta (Cryptophyte).